Reading from the N-terminus, the 45-residue chain is MCDKPDLSEVEKFDKKKLKKTNTEEKNTLPSKETIEQEKECVKSS.

A disordered region spans residues 19–45 (KKTNTEEKNTLPSKETIEQEKECVKSS). A compositionally biased stretch (basic and acidic residues) spans 21 to 45 (TNTEEKNTLPSKETIEQEKECVKSS).

It belongs to the thymosin beta family.

The protein localises to the cytoplasm. The protein resides in the cytoskeleton. Functionally, plays an important role in the organization of the cytoskeleton. Binds to and sequesters actin monomers (G actin) and therefore inhibits actin polymerization. The sequence is that of Thymosin beta-15A homolog from Coturnix japonica (Japanese quail).